The sequence spans 245 residues: 5-oxoprolinase subunit A (245 aa).

The protein belongs to the LamB/PxpA family. As to quaternary structure, forms a complex composed of PxpA, PxpB and PxpC.

It catalyses the reaction 5-oxo-L-proline + ATP + 2 H2O = L-glutamate + ADP + phosphate + H(+). Catalyzes the cleavage of 5-oxoproline to form L-glutamate coupled to the hydrolysis of ATP to ADP and inorganic phosphate. This chain is 5-oxoprolinase subunit A, found in Haemophilus influenzae (strain 86-028NP).